We begin with the raw amino-acid sequence, 308 residues long: MLTVQELVDDNADKIPFSWIAGHDAADRAIPDDGMAAADLVGHLNLIHPSRIQVFGQEELAYYTRFDLRRRMHHMDELLIGGVPAILLADGLTPPQDLIDQCAQHQVPLLSTPVAAAQLIDLLRIYLGKKLAPTTTVHGVFLDVLGLGVLITGESGLGKSELALELISRGHGLVADDAVELSRTAPGVIEGHCPQLLQNLLEVRGLGLLDIRTIFGETSVRRKMRLKLIVHLVRATAQDKFERLPLQDITQDMLGLPIRKVMLQVAAGRNLAVLVEAAVRNTILKLRGIDTLGEFMERQAMAILQSSK.

Residues H138 and K159 contribute to the active site. 153 to 160 (GESGLGKS) serves as a coordination point for ATP. S160 is a Mg(2+) binding site. D177 functions as the Proton acceptor; for phosphorylation activity. Proton donor; for dephosphorylation activity in the catalytic mechanism. The important for the catalytic mechanism of both phosphorylation and dephosphorylation stretch occupies residues 201-210 (LEVRGLGLLD). Position 202 (E202) interacts with Mg(2+). The active site involves R243. Positions 264–269 (QVAAGR) are important for the catalytic mechanism of dephosphorylation.

This sequence belongs to the HPrK/P family. In terms of assembly, homohexamer. Mg(2+) serves as cofactor.

The catalysed reaction is [HPr protein]-L-serine + ATP = [HPr protein]-O-phospho-L-serine + ADP + H(+). It catalyses the reaction [HPr protein]-O-phospho-L-serine + phosphate + H(+) = [HPr protein]-L-serine + diphosphate. Catalyzes the ATP- as well as the pyrophosphate-dependent phosphorylation of a specific serine residue in HPr, a phosphocarrier protein of the phosphoenolpyruvate-dependent sugar phosphotransferase system (PTS). HprK/P also catalyzes the pyrophosphate-producing, inorganic phosphate-dependent dephosphorylation (phosphorolysis) of seryl-phosphorylated HPr (P-Ser-HPr). This Bordetella bronchiseptica (strain ATCC BAA-588 / NCTC 13252 / RB50) (Alcaligenes bronchisepticus) protein is HPr kinase/phosphorylase.